The chain runs to 105 residues: U7-hexatoxin-Hi1a (105 aa).

The signal sequence occupies residues 1–23 (MKTILLFLGVCAVGASMMTGGWT).

This sequence belongs to the cystatin family. Post-translationally, contains 2 disulfide bonds. Expressed by the venom gland.

Its subcellular location is the secreted. Its function is as follows. Inhibits various C1 cysteine proteases. This protein has no toxic activity and its function in the venom is unknown. It may play a role as a housekeeping or regulatory protein. The sequence is that of U7-hexatoxin-Hi1a from Hadronyche infensa (Fraser island funnel-web spider).